The sequence spans 366 residues: Phenylalanine--tRNA ligase alpha subunit (366 aa).

Glu259 is a Mg(2+) binding site.

It belongs to the class-II aminoacyl-tRNA synthetase family. Phe-tRNA synthetase alpha subunit type 1 subfamily. Tetramer of two alpha and two beta subunits. Requires Mg(2+) as cofactor.

It localises to the cytoplasm. The catalysed reaction is tRNA(Phe) + L-phenylalanine + ATP = L-phenylalanyl-tRNA(Phe) + AMP + diphosphate + H(+). This is Phenylalanine--tRNA ligase alpha subunit from Novosphingobium aromaticivorans (strain ATCC 700278 / DSM 12444 / CCUG 56034 / CIP 105152 / NBRC 16084 / F199).